The primary structure comprises 282 residues: 3-hydroxyanthranilate 3,4-dioxygenase (282 aa).

The domain A (catalytic) stretch occupies residues 1-160 (MAMAINVKKW…SKQYKSGKPD (160 aa)). Position 43 (Arg-43) interacts with O2. Fe cation contacts are provided by His-47, Glu-53, and His-91. Residue Glu-53 participates in substrate binding. Substrate is bound by residues Arg-95 and Glu-105. The tract at residues 161-177 (PDQPKAKMPFCLSTEQV) is linker. Residues 178 to 282 (MEPFSFQHWL…LSTSQVPLPM (105 aa)) form a domain B region.

The protein belongs to the 3-HAO family. Monomer. The cofactor is Fe(2+).

The protein localises to the cytoplasm. It localises to the cytosol. The enzyme catalyses 3-hydroxyanthranilate + O2 = (2Z,4Z)-2-amino-3-carboxymuconate 6-semialdehyde. Its pathway is cofactor biosynthesis; NAD(+) biosynthesis; quinolinate from L-kynurenine: step 3/3. Catalyzes the oxidative ring opening of 3-hydroxyanthranilate to 2-amino-3-carboxymuconate semialdehyde, which spontaneously cyclizes to quinolinate. The protein is 3-hydroxyanthranilate 3,4-dioxygenase (haao) of Xenopus laevis (African clawed frog).